The primary structure comprises 420 residues: Tyrosine--tRNA ligase (420 aa).

An L-tyrosine-binding site is contributed by Y38. A 'HIGH' region motif is present at residues 43-52 (PTGDSLHIGH). Residues Y169 and Q173 each contribute to the L-tyrosine site. A 'KMSKS' region motif is present at residues 231-235 (KFGKS). K234 contributes to the ATP binding site. Residues 353–419 (KNLVDFLVDT…GKRKYTLVTI (67 aa)) enclose the S4 RNA-binding domain.

The protein belongs to the class-I aminoacyl-tRNA synthetase family. TyrS type 1 subfamily. As to quaternary structure, homodimer.

The protein resides in the cytoplasm. The catalysed reaction is tRNA(Tyr) + L-tyrosine + ATP = L-tyrosyl-tRNA(Tyr) + AMP + diphosphate + H(+). Functionally, catalyzes the attachment of tyrosine to tRNA(Tyr) in a two-step reaction: tyrosine is first activated by ATP to form Tyr-AMP and then transferred to the acceptor end of tRNA(Tyr). This Lactobacillus helveticus (strain DPC 4571) protein is Tyrosine--tRNA ligase.